The primary structure comprises 427 residues: Transcriptional enhancer factor TEF-3 (427 aa).

Positions 1–32 (MTSNEWSSPDSPEGSSISGGSQALDKPIDNDA) are disordered. Positions 7 to 21 (SSPDSPEGSSISGGS) are enriched in low complexity. The segment at residues 29 to 105 (DNDAEGVWSP…QVLARRKARE (77 aa)) is a DNA-binding region (TEA). The Nuclear localization signal signature appears at 78 to 94 (IKLRTGKTRTRKQVSSH). The tract at residues 163–206 (QPGTSHDVKPFSQNTYPVQPPLPLPGFESPAGPTPSPSAPLAPP) is disordered. Pro residues predominate over residues 194–205 (GPTPSPSAPLAP).

As to quaternary structure, interacts with WWTR1/TAZ. Interacts with YAP1. As to expression, preferentially expressed in lung and in skeletal muscle.

It is found in the nucleus. Its function is as follows. Transcription factor which plays a key role in the Hippo signaling pathway, a pathway involved in organ size control and tumor suppression by restricting proliferation and promoting apoptosis. The core of this pathway is composed of a kinase cascade wherein MST1/MST2, in complex with its regulatory protein SAV1, phosphorylates and activates LATS1/2 in complex with its regulatory protein MOB1, which in turn phosphorylates and inactivates YAP1 oncoprotein and WWTR1/TAZ. Acts by mediating gene expression of YAP1 and WWTR1/TAZ, thereby regulating cell proliferation, migration and epithelial mesenchymal transition (EMT) induction. Binds specifically and non-cooperatively to the Sph and GT-IIC 'enhansons' (5'-GTGGAATGT-3') and activates transcription. Binds to the M-CAT motif. Might play a role in the embryonic development of skeletal muscle. The protein is Transcriptional enhancer factor TEF-3 (Tead4) of Mus musculus (Mouse).